Reading from the N-terminus, the 304-residue chain is Homoserine kinase (304 aa).

An ATP-binding site is contributed by 91-101 (PLGKGMGSSAA).

The protein belongs to the GHMP kinase family. Homoserine kinase subfamily.

The protein resides in the cytoplasm. The enzyme catalyses L-homoserine + ATP = O-phospho-L-homoserine + ADP + H(+). Its pathway is amino-acid biosynthesis; L-threonine biosynthesis; L-threonine from L-aspartate: step 4/5. Catalyzes the ATP-dependent phosphorylation of L-homoserine to L-homoserine phosphate. This is Homoserine kinase from Solibacter usitatus (strain Ellin6076).